The primary structure comprises 349 residues: Protein-glutamate methylesterase/protein-glutamine glutaminase (349 aa).

The 118-residue stretch at 5–122 folds into the Response regulatory domain; it reads RVLCVDDSAL…REGMLAYSEL (118 aa). Asp-56 carries the post-translational modification 4-aspartylphosphate. Residues 152–344 form the CheB-type methylesterase domain; the sequence is LLSSEKLIAI…QRMLAQISSG (193 aa). Residues Ser-164, His-190, and Asp-286 contribute to the active site.

The protein belongs to the CheB family. Post-translationally, phosphorylated by CheA. Phosphorylation of the N-terminal regulatory domain activates the methylesterase activity.

The protein resides in the cytoplasm. It catalyses the reaction [protein]-L-glutamate 5-O-methyl ester + H2O = L-glutamyl-[protein] + methanol + H(+). It carries out the reaction L-glutaminyl-[protein] + H2O = L-glutamyl-[protein] + NH4(+). Functionally, involved in chemotaxis. Part of a chemotaxis signal transduction system that modulates chemotaxis in response to various stimuli. Catalyzes the demethylation of specific methylglutamate residues introduced into the chemoreceptors (methyl-accepting chemotaxis proteins or MCP) by CheR. Also mediates the irreversible deamidation of specific glutamine residues to glutamic acid. This Yersinia pseudotuberculosis serotype I (strain IP32953) protein is Protein-glutamate methylesterase/protein-glutamine glutaminase.